We begin with the raw amino-acid sequence, 273 residues long: Ethanolamine ammonia-lyase small subunit (273 aa).

Residues V164, E185, and C214 each coordinate adenosylcob(III)alamin.

It belongs to the EutC family. In terms of assembly, the basic unit is a heterodimer which dimerizes to form tetramers. The heterotetramers trimerize; 6 large subunits form a core ring with 6 small subunits projecting outwards. Requires adenosylcob(III)alamin as cofactor.

Its subcellular location is the bacterial microcompartment. The catalysed reaction is ethanolamine = acetaldehyde + NH4(+). It participates in amine and polyamine degradation; ethanolamine degradation. Catalyzes the deamination of various vicinal amino-alcohols to oxo compounds. Allows this organism to utilize ethanolamine as the sole source of nitrogen and carbon in the presence of external vitamin B12. The chain is Ethanolamine ammonia-lyase small subunit from Pseudomonas aeruginosa (strain UCBPP-PA14).